The following is an 87-amino-acid chain: uncharacterized protein (87 aa).

The 2Fe-2S ferredoxin-type domain maps to 4-87; the sequence is SKIIILNNNK…TISGSILIKI (84 aa). The [2Fe-2S] cluster site is built by C39, C44, C47, and C75.

It depends on [2Fe-2S] cluster as a cofactor.

This is an uncharacterized protein from Buchnera aphidicola subsp. Baizongia pistaciae (strain Bp).